We begin with the raw amino-acid sequence, 205 residues long: Large ribosomal subunit protein uL4 (205 aa).

The disordered stretch occupies residues 56–76 (VSGTTAKPYRQKHTGRARQGS).

The protein belongs to the universal ribosomal protein uL4 family. As to quaternary structure, part of the 50S ribosomal subunit.

Its function is as follows. One of the primary rRNA binding proteins, this protein initially binds near the 5'-end of the 23S rRNA. It is important during the early stages of 50S assembly. It makes multiple contacts with different domains of the 23S rRNA in the assembled 50S subunit and ribosome. Forms part of the polypeptide exit tunnel. This chain is Large ribosomal subunit protein uL4, found in Ehrlichia ruminantium (strain Welgevonden).